Here is a 377-residue protein sequence, read N- to C-terminus: Flap endonuclease 1 (377 aa).

An N-domain region spans residues 1 to 105 (MGIKGLSQVI…GELAKRASRQ (105 aa)). Asp34 contributes to the Mg(2+) binding site. Arg47 and Arg71 together coordinate DNA. Mg(2+) is bound at residue Asp87. Residues 96-115 (GELAKRASRQQKAREEREEA) are disordered. Residues 123 to 254 (MVDKFAKRTV…ARAVELIRQH (132 aa)) are I-domain. Mg(2+) is bound by residues Glu159, Glu161, Asp180, and Asp182. Glu159 lines the DNA pocket. The DNA site is built by Gly232 and Asp234. Asp234 lines the Mg(2+) pocket. The interval 337 to 345 (PQGRLDSFF) is interaction with PCNA. Residues 350 to 377 (STKKEKEKPKAAAKRKRDTKSSAPKKKR) are disordered. A compositionally biased stretch (basic residues) spans 360–377 (AAAKRKRDTKSSAPKKKR).

This sequence belongs to the XPG/RAD2 endonuclease family. FEN1 subfamily. Interacts with PCNA. Three molecules of rad2 bind to one PCNA trimer with each molecule binding to one PCNA monomer. PCNA stimulates the nuclease activity without altering cleavage specificity. Requires Mg(2+) as cofactor. In terms of processing, phosphorylated. Phosphorylation upon DNA damage induces relocalization to the nuclear plasma.

The protein resides in the nucleus. It localises to the nucleolus. Its subcellular location is the nucleoplasm. It is found in the mitochondrion. In terms of biological role, structure-specific nuclease with 5'-flap endonuclease and 5'-3' exonuclease activities involved in DNA replication and repair. During DNA replication, cleaves the 5'-overhanging flap structure that is generated by displacement synthesis when DNA polymerase encounters the 5'-end of a downstream Okazaki fragment. It enters the flap from the 5'-end and then tracks to cleave the flap base, leaving a nick for ligation. Also involved in the long patch base excision repair (LP-BER) pathway, by cleaving within the apurinic/apyrimidinic (AP) site-terminated flap. Acts as a genome stabilization factor that prevents flaps from equilibrating into structures that lead to duplications and deletions. Also possesses 5'-3' exonuclease activity on nicked or gapped double-stranded DNA, and exhibits RNase H activity. Also involved in replication and repair of rDNA and in repairing mitochondrial DNA. This is Flap endonuclease 1 from Schizosaccharomyces japonicus (strain yFS275 / FY16936) (Fission yeast).